The following is a 1184-amino-acid chain: DNA polymerase III subunit alpha (1184 aa).

This sequence belongs to the DNA polymerase type-C family. DnaE subfamily. In terms of assembly, the Pol III holoenzyme complex contains at least 10 different subunits organized into 3 functionally essential subassemblies: the Pol III core, the beta sliding clamp processivity factor and the clamp-loading complex. The Pol III core (subunits alpha, epsilon and theta) contains the polymerase and the 3'-5' exonuclease proofreading activities. The polymerase is tethered to the template via the dimeric beta sliding clamp processivity factor. The clamp loader (also called gamma complex) assembles the beta sliding clamp onto the primed template and plays a central role in the organization and communication at the replication fork. The clamp-loading complex contains delta, delta', psi and chi, and 3 copies of either or both of two different DnaX proteins, gamma and tau. The DNA replisome complex has a single clamp loader (3 tau and 1 each of delta, delta', psi and chi subunits) which binds 3 Pol III cores (1 core on the leading strand and 2 on the lagging strand) each with a beta sliding clamp dimer. Interacts with the beta-sliding clamp (DnaN). Co-immunoprecipitates with DarG in the presence and absence of darT.

It is found in the cytoplasm. It catalyses the reaction DNA(n) + a 2'-deoxyribonucleoside 5'-triphosphate = DNA(n+1) + diphosphate. Its function is as follows. DNA polymerase III is a complex, multichain enzyme responsible for most of the replicative synthesis in bacteria. Pol III also exhibits 3' to 5' exonuclease activity. The alpha chain is the DNA polymerase. The sequence is that of DNA polymerase III subunit alpha (dnaE1) from Mycobacterium tuberculosis (strain ATCC 25618 / H37Rv).